The primary structure comprises 94 residues: MCGDQSDHVLQHWTVDISIDEHEGLTRAKARLRWREKELVGVGLARLNPADRNVPEIGDELSVARALSDLGKRMLKVSTHDIEAVTHQPARLLY.

It to M.tuberculosis Rv2632c.

This is an uncharacterized protein from Mycobacterium tuberculosis (strain CDC 1551 / Oshkosh).